The primary structure comprises 170 residues: Prenyl-diphosphate phosphatase (170 aa).

One can recognise a Nudix hydrolase domain in the interval 25–155 (HIHRASQLIL…PGNYTPALRE (131 aa)). The Nudix box signature appears at 59–83 (YSVSGTVADESYEACIAREMLEEIG). Residues Glu77 and Glu81 each contribute to the Mg(2+) site.

This sequence belongs to the Nudix hydrolase family. Mg(2+) is required as a cofactor.

The enzyme catalyses dimethylallyl diphosphate + H2O = dimethylallyl phosphate + phosphate + H(+). The catalysed reaction is isopentenyl diphosphate + H2O = isopentenyl phosphate + phosphate + H(+). It catalyses the reaction (2E,6E)-farnesyl diphosphate + H2O = (2E,6E)-farnesyl phosphate + phosphate + H(+). It carries out the reaction (2E)-geranyl diphosphate + H2O = (2E)-geranyl phosphate + phosphate + H(+). It participates in isoprenoid biosynthesis. Hydrolyzes homoallylic isopentenyl diphosphate (IPP), its allylic isomer dimethylallyl diphosphate (DMAPP) and short-chain prenyl diphosphates geranyl diphosphate (GPP) and farnesyl diphosphate (FPP) to their corresponding monophosphate forms with high activity. The preferred substrate is IPP. ADP, NADPH, Ap5A and thiamine diphosphate (TPP) are weakly hydrolyzed. No hydrolysis with ATP, dNTPs, 8-OH-dGTP, NAD+, FAD or acetyl-CoA. The likely physiological role of this enzyme is to provide a substrate dimethylallyl phosphate (DMAP) for prenylated flavin mononucleotide (prenyl-FMN) synthase MM_1871 involved in the biosynthesis of prenyl-FMN, a coenzyme required in the archaea-specific mevalonate pathway. This is Prenyl-diphosphate phosphatase from Methanosarcina mazei (strain ATCC BAA-159 / DSM 3647 / Goe1 / Go1 / JCM 11833 / OCM 88) (Methanosarcina frisia).